The following is a 183-amino-acid chain: Adenine phosphoribosyltransferase (183 aa).

This sequence belongs to the purine/pyrimidine phosphoribosyltransferase family. As to quaternary structure, homodimer.

It is found in the cytoplasm. The enzyme catalyses AMP + diphosphate = 5-phospho-alpha-D-ribose 1-diphosphate + adenine. It participates in purine metabolism; AMP biosynthesis via salvage pathway; AMP from adenine: step 1/1. Its function is as follows. Catalyzes a salvage reaction resulting in the formation of AMP, that is energically less costly than de novo synthesis. This is Adenine phosphoribosyltransferase from Escherichia fergusonii (strain ATCC 35469 / DSM 13698 / CCUG 18766 / IAM 14443 / JCM 21226 / LMG 7866 / NBRC 102419 / NCTC 12128 / CDC 0568-73).